The following is a 101-amino-acid chain: ATP-dependent Clp protease adapter protein ClpS (101 aa).

The disordered stretch occupies residues 1 to 24 (MVVASAPAKPGSVGQQESASRDAT). The span at 13 to 23 (VGQQESASRDA) shows a compositional bias: polar residues.

This sequence belongs to the ClpS family. Binds to the N-terminal domain of the chaperone ClpA.

Functionally, involved in the modulation of the specificity of the ClpAP-mediated ATP-dependent protein degradation. The chain is ATP-dependent Clp protease adapter protein ClpS from Mycobacterium marinum (strain ATCC BAA-535 / M).